Here is a 726-residue protein sequence, read N- to C-terminus: Catalase-peroxidase (726 aa).

Residues 1–16 form the signal peptide; sequence MDNPTDSAGKCPVAHG. A disordered region spans residues 1–26; sequence MDNPTDSAGKCPVAHGNTPRSRSNRD. Residues 96–218 constitute a cross-link (tryptophyl-tyrosyl-methioninium (Trp-Tyr) (with M-244)); it reads WHSAGTYRIT…LGAVQMGLIY (123 aa). H97 (proton acceptor) is an active-site residue. The tryptophyl-tyrosyl-methioninium (Tyr-Met) (with W-96) cross-link spans 218-244; the sequence is YVNPEGPNGTPDPLASARDIRETFARM. Residue H259 participates in heme b binding.

It belongs to the peroxidase family. Peroxidase/catalase subfamily. In terms of assembly, homodimer or homotetramer. Requires heme b as cofactor. In terms of processing, formation of the three residue Trp-Tyr-Met cross-link is important for the catalase, but not the peroxidase activity of the enzyme.

The enzyme catalyses H2O2 + AH2 = A + 2 H2O. It carries out the reaction 2 H2O2 = O2 + 2 H2O. Functionally, bifunctional enzyme with both catalase and broad-spectrum peroxidase activity. The chain is Catalase-peroxidase from Rhizobium johnstonii (strain DSM 114642 / LMG 32736 / 3841) (Rhizobium leguminosarum bv. viciae).